The chain runs to 162 residues: Phosphopantetheine adenylyltransferase (162 aa).

Substrate is bound at residue Ser-9. ATP contacts are provided by residues 9 to 10 (SF) and His-17. Residues Lys-41, Val-77, and Lys-91 each contribute to the substrate site. ATP contacts are provided by residues 92-94 (GLR), Glu-102, and 126-132 (YAFLSSS).

This sequence belongs to the bacterial CoaD family. As to quaternary structure, homohexamer. The cofactor is Mg(2+).

Its subcellular location is the cytoplasm. The enzyme catalyses (R)-4'-phosphopantetheine + ATP + H(+) = 3'-dephospho-CoA + diphosphate. It functions in the pathway cofactor biosynthesis; coenzyme A biosynthesis; CoA from (R)-pantothenate: step 4/5. Its function is as follows. Reversibly transfers an adenylyl group from ATP to 4'-phosphopantetheine, yielding dephospho-CoA (dPCoA) and pyrophosphate. This Frankia alni (strain DSM 45986 / CECT 9034 / ACN14a) protein is Phosphopantetheine adenylyltransferase.